The following is a 369-amino-acid chain: Cobalt-precorrin-5B C(1)-methyltransferase (369 aa).

Belongs to the CbiD family.

It catalyses the reaction Co-precorrin-5B + S-adenosyl-L-methionine = Co-precorrin-6A + S-adenosyl-L-homocysteine. It functions in the pathway cofactor biosynthesis; adenosylcobalamin biosynthesis; cob(II)yrinate a,c-diamide from sirohydrochlorin (anaerobic route): step 6/10. Functionally, catalyzes the methylation of C-1 in cobalt-precorrin-5B to form cobalt-precorrin-6A. The polypeptide is Cobalt-precorrin-5B C(1)-methyltransferase (Prosthecochloris aestuarii (strain DSM 271 / SK 413)).